Here is a 354-residue protein sequence, read N- to C-terminus: UDP-3-O-acylglucosamine N-acyltransferase (354 aa).

His-247 acts as the Proton acceptor in catalysis.

The protein belongs to the transferase hexapeptide repeat family. LpxD subfamily. As to quaternary structure, homotrimer.

The enzyme catalyses a UDP-3-O-[(3R)-3-hydroxyacyl]-alpha-D-glucosamine + a (3R)-hydroxyacyl-[ACP] = a UDP-2-N,3-O-bis[(3R)-3-hydroxyacyl]-alpha-D-glucosamine + holo-[ACP] + H(+). The protein operates within bacterial outer membrane biogenesis; LPS lipid A biosynthesis. Its function is as follows. Catalyzes the N-acylation of UDP-3-O-acylglucosamine using 3-hydroxyacyl-ACP as the acyl donor. Is involved in the biosynthesis of lipid A, a phosphorylated glycolipid that anchors the lipopolysaccharide to the outer membrane of the cell. The polypeptide is UDP-3-O-acylglucosamine N-acyltransferase (Chlamydia trachomatis serovar L2 (strain ATCC VR-902B / DSM 19102 / 434/Bu)).